Here is a 159-residue protein sequence, read N- to C-terminus: Cytochrome c-type biogenesis CcmH-like mitochondrial protein (159 aa).

Over 1–82 the chain is Mitochondrial intermembrane; it reads MEKTDEERKK…ETVLYAPKFD (82 aa). Heme contacts are provided by Cys-27 and Cys-30. Residues 83–105 traverse the membrane as a helical segment; sequence LQTAALWLTPVIIAGGTAAGIVY. The Mitochondrial matrix portion of the chain corresponds to 106–159; that stretch reads QKHRLRKNVDIMALNLIRGVPLTPKERVTILDVLIPPSPPPQGVVSRLRRWLNR.

This sequence belongs to the CcmH/CycL/Ccl2/NrfF family. As to quaternary structure, interacts (via N-terminus) with CYTC-1. Interacts with CCMFN1 and CCMFN2.

It is found in the mitochondrion inner membrane. Functionally, plays a central role in mitochondrial cytochrome c maturation. Probable component of a heme lyase complex involved in the reduction of apocytochrome c. Forms a complex with CCMF proteins (CCMFC, CCMFN1 and CCMFN2) that performs the assembly of heme with c-type apocytochromes in mitochondria. The protein is Cytochrome c-type biogenesis CcmH-like mitochondrial protein of Arabidopsis thaliana (Mouse-ear cress).